Consider the following 179-residue polypeptide: Ubiquinol-cytochrome c reductase iron-sulfur subunit (179 aa).

Residues 14-35 (FLYVATAAVGAAGVAAVAWPFI) traverse the membrane as a helical segment. Positions 80–173 (AKEIQSEEAA…YEFVDNTKIR (94 aa)) constitute a Rieske domain. Residues cysteine 118, histidine 120, cysteine 137, and histidine 140 each coordinate [2Fe-2S] cluster. Cysteine 123 and cysteine 139 form a disulfide bridge.

Belongs to the Rieske iron-sulfur protein family. In terms of assembly, the main subunits of complex b-c1 are: cytochrome b, cytochrome c1 and the Rieske protein. [2Fe-2S] cluster is required as a cofactor.

Its subcellular location is the cell membrane. It carries out the reaction a quinol + 2 Fe(III)-[cytochrome c](out) = a quinone + 2 Fe(II)-[cytochrome c](out) + 2 H(+)(out). In terms of biological role, component of the ubiquinol-cytochrome c reductase complex (complex III or cytochrome b-c1 complex), which is a respiratory chain that generates an electrochemical potential coupled to ATP synthesis. The chain is Ubiquinol-cytochrome c reductase iron-sulfur subunit (petA) from Blastochloris viridis (Rhodopseudomonas viridis).